A 372-amino-acid polypeptide reads, in one-letter code: Hydrogenase-2 small chain (372 aa).

Positions 1-37 (MTGDNTLIHSHGINRRDFMKLCAALAATMGLSSKAAA) form a signal peptide, tat-type signal. The [4Fe-4S] cluster site is built by cysteine 59, cysteine 62, cysteine 157, cysteine 191, histidine 229, cysteine 232, cysteine 257, and cysteine 263. Cysteine 272, cysteine 292, and cysteine 295 together coordinate [3Fe-4S] cluster.

This sequence belongs to the [NiFe]/[NiFeSe] hydrogenase small subunit family. Heterodimer of a large and a small subunit. [4Fe-4S] cluster serves as cofactor. It depends on [3Fe-4S] cluster as a cofactor. In terms of processing, predicted to be exported by the Tat system. The position of the signal peptide cleavage has not been experimentally proven.

The protein resides in the cell membrane. It localises to the periplasm. The catalysed reaction is H2 + A = AH2. Functionally, this is one of three E.coli hydrogenases synthesized in response to different physiological conditions. HYD2 is involved in hydrogen uptake. The chain is Hydrogenase-2 small chain (hybO) from Escherichia coli O157:H7.